Consider the following 473-residue polypeptide: MGRKKIQITRIMDERNRQVTFTKRKFGLMKKAYELSVLCDCEIALIIFNSTNKLFQYASTDMDKVLLKYTEYNEPHESRTNSDIVETLRKKGLNGCDSPDPDADDSVGHSPESEDKYRKINEDIDLMISRQRLCAVPPPNFEMPVSIPVSSHNSLVYSNPVSSLGNPNLLPLAHPSLQRNSMSPGVTHRPPSAGNTGGLMGGDLTSGAGTSAGNGYGNPRNSPGLLVSPGNLNKNMQAKSPPPMNLGMNNRKPDLRVLIPPGSKNTMPSVSEDVDLLLNQRINNSQSAQSLATPVVSVATPTLPGQGMGGYPSAISTTYGTEYSLSSADLSSLSGFNTASALHLGSVTGWQQQHLHNMPPSALSQLGACTSTHLSQSSNLSLPSTQSLNIKSEPVSPPRDRTTTPSRYPQHTRHEAGRSPVDSLSSCSSSYDGSDREDHRNEFHSPIGLTRPSPDERESPSVKRMRLSEGWAT.

Residues arginine 3 to tyrosine 57 enclose the MADS-box domain. Lysine 4 is subject to N6-acetyllysine. Positions alanine 58–glutamate 86 form a DNA-binding region, mef2-type. Phosphoserine; by CK2 is present on serine 59. Residues lysine 91–lysine 116 are disordered. Serine 98, serine 106, and serine 110 each carry phosphoserine. N6-acetyllysine occurs at positions 116 and 119. The interval asparagine 180–glycine 224 is disordered. Phosphoserine occurs at positions 222 and 228. N6-acetyllysine is present on residues lysine 234 and lysine 239. Serine 240 carries the phosphoserine modification. N6-acetyllysine is present on residues lysine 252 and lysine 264. The tract at residues serine 271–leucine 278 is beta domain. A phosphothreonine; by MAPK14 mark is found at threonine 293 and threonine 300. The tract at residues alanine 368–arginine 399 is transcription repressor. The segment covering serine 375–isoleucine 390 has biased composition (polar residues). Positions serine 375–threonine 473 are disordered. A Glycyl lysine isopeptide (Lys-Gly) (interchain with G-Cter in SUMO) cross-link involves residue lysine 391. Serine 396 is subject to Phosphoserine; by CDK5. At serine 419 the chain carries Phosphoserine; by MAPK7. Positions serine 419–aspartate 432 are enriched in low complexity. The segment covering glycine 433–phenylalanine 443 has biased composition (basic and acidic residues). Serine 445 is subject to Phosphoserine.

Belongs to the MEF2 family. In terms of assembly, forms a complex with class II HDACs in undifferentiating cells. On myogenic differentiation, HDACs are released into the cytoplasm allowing MEF2s to interact with other proteins for activation. Interacts with EP300 in differentiating cells; the interaction acetylates MEF2C leading to increased DNA binding and activation. Interacts with HDAC7 and CARM1. Interacts with HDAC4 and HDAC9; the interaction with HDACs represses transcriptional activity. Interacts with LPIN1. Interacts with MYOCD. Interacts with AKAP13. Interacts with FOXK1; the interaction inhibits MEF2C transactivation activity. Interacts (via N-terminus) with HABP4; this interaction decreases DNA-binding activity of MEF2C in myocardial cells in response to mechanical stress. Interacts with JPH2; interaction specifically takes place with the Junctophilin-2 N-terminal fragment cleavage product of JPH2. Interacts (via MADS box) with SOX18. Interacts with PHF7; the interaction promotes MEF2C binding to its transcription targets. Post-translationally, phosphorylation on Ser-59 enhances DNA binding activity. Phosphorylation on Ser-396 is required for Lys-391 sumoylation and inhibits transcriptional activity. Acetylated by p300 on several sites in diffentiating myocytes. Acetylation on Lys-4 increases DNA binding and transactivation. In terms of processing, sumoylated on Lys-391 with SUMO2 but not by SUMO1 represses transcriptional activity. Post-translationally, proteolytically cleaved in cerebellar granule neurons, probably by caspase 7, following neurotoxicity. Preferentially cleaves the CDK5-mediated hyperphosphorylated form which leads to neuron apoptosis and transcriptional inactivation. In terms of tissue distribution, expressed in brain and skeletal muscle.

The protein resides in the nucleus. The protein localises to the cytoplasm. Its subcellular location is the sarcoplasm. Functionally, transcription activator which binds specifically to the MEF2 element present in the regulatory regions of many muscle-specific genes. Controls cardiac morphogenesis and myogenesis, and is also involved in vascular development. Enhances transcriptional activation mediated by SOX18. Plays an essential role in hippocampal-dependent learning and memory by suppressing the number of excitatory synapses and thus regulating basal and evoked synaptic transmission. Crucial for normal neuronal development, distribution, and electrical activity in the neocortex. Necessary for proper development of megakaryocytes and platelets and for bone marrow B-lymphopoiesis. Required for B-cell survival and proliferation in response to BCR stimulation, efficient IgG1 antibody responses to T-cell-dependent antigens and for normal induction of germinal center B-cells. May also be involved in neurogenesis and in the development of cortical architecture. Isoforms that lack the repressor domain are more active than isoform 1. This is Myocyte-specific enhancer factor 2C from Homo sapiens (Human).